We begin with the raw amino-acid sequence, 385 residues long: 8-amino-7-oxononanoate synthase (385 aa).

Arg-21 serves as a coordination point for substrate. 108–109 (GF) is a binding site for pyridoxal 5'-phosphate. Substrate is bound at residue His-133. The pyridoxal 5'-phosphate site is built by Ser-179, His-207, and Thr-233. Lys-236 bears the N6-(pyridoxal phosphate)lysine mark. Thr-352 is a substrate binding site.

It belongs to the class-II pyridoxal-phosphate-dependent aminotransferase family. BioF subfamily. Homodimer. The cofactor is pyridoxal 5'-phosphate.

It catalyses the reaction 6-carboxyhexanoyl-[ACP] + L-alanine + H(+) = (8S)-8-amino-7-oxononanoate + holo-[ACP] + CO2. It participates in cofactor biosynthesis; biotin biosynthesis. Catalyzes the decarboxylative condensation of pimeloyl-[acyl-carrier protein] and L-alanine to produce 8-amino-7-oxononanoate (AON), [acyl-carrier protein], and carbon dioxide. This is 8-amino-7-oxononanoate synthase from Klebsiella pneumoniae subsp. pneumoniae (strain ATCC 700721 / MGH 78578).